Here is a 447-residue protein sequence, read N- to C-terminus: ATP-dependent 6-phosphofructokinase (447 aa).

Residues G88, R154 to G155, and G179 to T182 contribute to the ATP site. D180 contacts Mg(2+). Residues T208 to D210, M253 to R255, E315, and Y368 to R371 each bind substrate. D210 acts as the Proton acceptor in catalysis.

This sequence belongs to the phosphofructokinase type A (PFKA) family. PPi-dependent PFK group II subfamily. Atypical ATP-dependent clade 'X' sub-subfamily. As to quaternary structure, homodimer. Mg(2+) is required as a cofactor.

It localises to the cytoplasm. The catalysed reaction is beta-D-fructose 6-phosphate + ATP = beta-D-fructose 1,6-bisphosphate + ADP + H(+). It functions in the pathway carbohydrate degradation; glycolysis; D-glyceraldehyde 3-phosphate and glycerone phosphate from D-glucose: step 3/4. In terms of biological role, catalyzes the phosphorylation of D-fructose 6-phosphate to fructose 1,6-bisphosphate by ATP, the first committing step of glycolysis. The chain is ATP-dependent 6-phosphofructokinase from Borreliella burgdorferi (strain ATCC 35210 / DSM 4680 / CIP 102532 / B31) (Borrelia burgdorferi).